The following is a 495-amino-acid chain: Heterogeneous nuclear ribonucleoprotein Q (495 aa).

Basic and acidic residues predominate over residues 1 to 10 (MSDARDNDDR). Residues 1 to 101 (MSDARDNDDR…KPPSPIDDED (101 aa)) are disordered. 2 stretches are compositionally biased toward acidic residues: residues 11 to 46 (VDFE…DDDV) and 67 to 101 (MEDV…DDED). RRM domains are found at residues 116–194 (SEVF…LSET), 196–278 (NRLF…WADP), and 292–368 (KALY…LAKP). The tract at residues 452 to 495 (MPMAAAPPQRPRRNDRNNGSSGGSGRDNSHEHDGNRGGRRYRPY) is disordered. A compositionally biased stretch (basic and acidic residues) spans 478-487 (DNSHEHDGNR).

As to quaternary structure, interacts with LHP1 in the nucleus on a common set of chromatin regions. As to expression, predominantly expressed in vascular and meristematic tissues. Expressed throughout development in seedlings, roots, leaves, floral buds and siliques.

It localises to the nucleus. Its subcellular location is the cytoplasm. The protein localises to the microsome. Transcriptional activator that binds DNA on GAGA-like motif and 5'-(C/G)ACGTG(G/T)C(A/G)-3' consensus motif in the promoters of target genes. Component of ribonucleosomes, which are complexes of at least 20 other different heterogeneous nuclear ribonucleoproteins (hnRNP). hnRNP play an important role in processing of precursor mRNA in the nucleus. Required during flower development and for cell fate determination. Acts both as an antagonist and as a promoter of polycomb LHP1 gene regulation activity, depending of target genes, to regulate the transcription of stress-responsive and flowering genes. May regulate histone H3 trimethylation on lysine 27 (H3K27me3). Recognizes and binds histone H3 tails methylated at 'Lys-4' (H3K4me) and acetylated at 'Lys-9' (H3K9ac), leading to epigenetic activation. When in complex with LHP1, recognizes and binds histone H3 tails methylated at 'Lys-4' (H3K4me) and 'Lys-27' (H3K27me), mostly corresponding to stress-responsive genes. May function as a suppressor of cell-autonomous immune responses involving glucosinolates, salicylic acid (SA) and jasmonic acid (JA) pathways toward pathogenic bacteria and fungi. This Arabidopsis thaliana (Mouse-ear cress) protein is Heterogeneous nuclear ribonucleoprotein Q.